The primary structure comprises 360 residues: Chorismate synthase (360 aa).

Arg46 provides a ligand contact to NADP(+). FMN-binding positions include 122-124 (RAS), Gly282, 297-301 (KPTPS), and Arg324.

The protein belongs to the chorismate synthase family. FMNH2 is required as a cofactor.

The enzyme catalyses 5-O-(1-carboxyvinyl)-3-phosphoshikimate = chorismate + phosphate. It participates in metabolic intermediate biosynthesis; chorismate biosynthesis; chorismate from D-erythrose 4-phosphate and phosphoenolpyruvate: step 7/7. Its function is as follows. Catalyzes the anti-1,4-elimination of the C-3 phosphate and the C-6 proR hydrogen from 5-enolpyruvylshikimate-3-phosphate (EPSP) to yield chorismate, which is the branch point compound that serves as the starting substrate for the three terminal pathways of aromatic amino acid biosynthesis. This reaction introduces a second double bond into the aromatic ring system. The sequence is that of Chorismate synthase from Archaeoglobus fulgidus (strain ATCC 49558 / DSM 4304 / JCM 9628 / NBRC 100126 / VC-16).